The sequence spans 155 residues: Cytochrome c-type biogenesis protein CcmE (155 aa).

Residues Met1–Arg8 lie on the Cytoplasmic side of the membrane. A helical; Signal-anchor for type II membrane protein transmembrane segment spans residues Leu9–Ala29. At Leu30–Ser155 the chain is on the periplasmic side. 2 residues coordinate heme: His124 and Tyr128.

Belongs to the CcmE/CycJ family.

It localises to the cell inner membrane. Its function is as follows. Heme chaperone required for the biogenesis of c-type cytochromes. Transiently binds heme delivered by CcmC and transfers the heme to apo-cytochromes in a process facilitated by CcmF and CcmH. This chain is Cytochrome c-type biogenesis protein CcmE, found in Teredinibacter turnerae (strain ATCC 39867 / T7901).